We begin with the raw amino-acid sequence, 629 residues long: Phosphomethylpyrimidine synthase (629 aa).

The tract at residues 1 to 20 is disordered; sequence MSTTLKNAAHLSESAQVDSG. Residues Asn233, Met262, Tyr291, His327, 347–349, 388–391, and Glu427 contribute to the substrate site; these read SRG and DGLR. His431 lines the Zn(2+) pocket. Tyr454 serves as a coordination point for substrate. His495 contacts Zn(2+). Positions 575, 578, and 583 each coordinate [4Fe-4S] cluster.

It belongs to the ThiC family. Homodimer. The cofactor is [4Fe-4S] cluster.

It carries out the reaction 5-amino-1-(5-phospho-beta-D-ribosyl)imidazole + S-adenosyl-L-methionine = 4-amino-2-methyl-5-(phosphooxymethyl)pyrimidine + CO + 5'-deoxyadenosine + formate + L-methionine + 3 H(+). It participates in cofactor biosynthesis; thiamine diphosphate biosynthesis. Functionally, catalyzes the synthesis of the hydroxymethylpyrimidine phosphate (HMP-P) moiety of thiamine from aminoimidazole ribotide (AIR) in a radical S-adenosyl-L-methionine (SAM)-dependent reaction. In Pseudomonas savastanoi pv. phaseolicola (strain 1448A / Race 6) (Pseudomonas syringae pv. phaseolicola (strain 1448A / Race 6)), this protein is Phosphomethylpyrimidine synthase.